We begin with the raw amino-acid sequence, 397 residues long: Probable sugar efflux transporter (397 aa).

12 helical membrane-spanning segments follow: residues 15 to 35, 51 to 71, 80 to 100, 103 to 123, 137 to 157, 169 to 189, 209 to 229, 246 to 266, 277 to 297, 299 to 319, 333 to 353, and 365 to 385; these read VIVM…PVAL, GLMI…CMLM, LLIS…FAWN, VLLI…SITA, QALG…LPLG, TFTL…RLLP, PMLI…FTAY, KATA…VLFS, LLSS…VSGI, GAIF…SLAM, VATA…ALIG, and IGYV…LMFL.

Belongs to the major facilitator superfamily. SotB (TC 2.A.1.2) family.

The protein localises to the cell inner membrane. Its function is as follows. Involved in the efflux of sugars. The physiological role may be the reduction of the intracellular concentration of toxic sugars or sugar metabolites. This Mannheimia succiniciproducens (strain KCTC 0769BP / MBEL55E) protein is Probable sugar efflux transporter.